The chain runs to 306 residues: Glycine--tRNA ligase alpha subunit (306 aa).

Belongs to the class-II aminoacyl-tRNA synthetase family. In terms of assembly, tetramer of two alpha and two beta subunits.

Its subcellular location is the cytoplasm. It catalyses the reaction tRNA(Gly) + glycine + ATP = glycyl-tRNA(Gly) + AMP + diphosphate. The polypeptide is Glycine--tRNA ligase alpha subunit (Aliivibrio fischeri (strain ATCC 700601 / ES114) (Vibrio fischeri)).